A 160-amino-acid chain; its full sequence is Type IV major fimbrial protein FimA (160 aa).

Positions 1–7 are cleaved as a propeptide — leader sequence; the sequence is MKSLQKG. Phe-8 is subject to N-methylphenylalanine. The helical transmembrane segment at 8–28 threads the bilayer; that stretch reads FTLIELMIVVAIIGILAAIAI.

This sequence belongs to the N-Me-Phe pilin family. As to quaternary structure, the pili are polar flexible filaments of about 5.4 nanometers diameter and 2.5 micrometers average length; they consist of only a single polypeptide chain arranged in a helical configuration of five subunits per turn in the assembled pilus.

It is found in the fimbrium. It localises to the membrane. In terms of biological role, major component of the type IV fimbriae that plays an essential role in twitching motility, natural transformation, and protease secretion. The chain is Type IV major fimbrial protein FimA (fimA) from Dichelobacter nodosus (Bacteroides nodosus).